Consider the following 347-residue polypeptide: ATPase GET3 (347 aa).

Residue 26–33 (KGGVGKTT) coordinates ATP. Residue aspartate 57 is part of the active site. Positions 240 and 267 each coordinate ATP. Residues cysteine 279 and cysteine 282 each coordinate Zn(2+).

The protein belongs to the arsA ATPase family. As to quaternary structure, homodimer. Component of the Golgi to ER traffic (GET) complex, which is composed of GET1, GET2 and GET3. Within the complex, GET1 and GET2 form a heterotetramer which is stabilized by phosphatidylinositol binding and which binds to the GET3 homodimer. Interacts with the chloride channel protein GEF1.

Its subcellular location is the cytoplasm. It is found in the endoplasmic reticulum. The protein resides in the golgi apparatus. In terms of biological role, ATPase required for the post-translational delivery of tail-anchored (TA) proteins to the endoplasmic reticulum. Recognizes and selectively binds the transmembrane domain of TA proteins in the cytosol. This complex then targets to the endoplasmic reticulum by membrane-bound receptors GET1 and GET2, where the tail-anchored protein is released for insertion. This process is regulated by ATP binding and hydrolysis. ATP binding drives the homodimer towards the closed dimer state, facilitating recognition of newly synthesized TA membrane proteins. ATP hydrolysis is required for insertion. Subsequently, the homodimer reverts towards the open dimer state, lowering its affinity for the GET1-GET2 receptor, and returning it to the cytosol to initiate a new round of targeting. Cooperates with the HDEL receptor ERD2 to mediate the ATP-dependent retrieval of resident ER proteins that contain a C-terminal H-D-E-L retention signal from the Golgi to the ER. Involved in low-level resistance to the oxyanions arsenite and arsenate, and in heat tolerance. In Scheffersomyces stipitis (strain ATCC 58785 / CBS 6054 / NBRC 10063 / NRRL Y-11545) (Yeast), this protein is ATPase GET3.